We begin with the raw amino-acid sequence, 500 residues long: ADP,ATP carrier protein 5 (500 aa).

Helical transmembrane passes span leucine 26 to leucine 46, isoleucine 62 to tyrosine 82, isoleucine 94 to tyrosine 114, tyrosine 149 to tryptophan 169, phenylalanine 184 to methionine 204, isoleucine 224 to leucine 244, leucine 287 to valine 307, leucine 328 to methionine 348, alanine 357 to phenylalanine 377, isoleucine 381 to glycine 401, and serine 469 to valine 489.

It belongs to the ADP/ATP translocase tlc family.

It is found in the cell membrane. In terms of biological role, provides the rickettsial cell with host ATP in exchange for rickettsial ADP. This is an obligate exchange system. This energy acquiring activity is an important component of rickettsial parasitism. The polypeptide is ADP,ATP carrier protein 5 (tlcE) (Rickettsia prowazekii (strain Madrid E)).